The chain runs to 108 residues: Nucleoid-associated protein BARBAKC583_1239 (108 aa).

This sequence belongs to the YbaB/EbfC family. In terms of assembly, homodimer.

The protein resides in the cytoplasm. Its subcellular location is the nucleoid. In terms of biological role, binds to DNA and alters its conformation. May be involved in regulation of gene expression, nucleoid organization and DNA protection. In Bartonella bacilliformis (strain ATCC 35685 / KC583 / Herrer 020/F12,63), this protein is Nucleoid-associated protein BARBAKC583_1239.